We begin with the raw amino-acid sequence, 488 residues long: Ribulose bisphosphate carboxylase large chain 1 (488 aa).

Substrate contacts are provided by N128 and T178. K180 acts as the Proton acceptor in catalysis. Residue K182 coordinates substrate. Residues K206, D208, and E209 each contribute to the Mg(2+) site. Position 206 is an N6-carboxylysine (K206). H298 acts as the Proton acceptor in catalysis. 3 residues coordinate substrate: R299, H331, and S383.

It belongs to the RuBisCO large chain family. Type I subfamily. In terms of assembly, heterohexadecamer of 8 large chains and 8 small chains. Mg(2+) serves as cofactor.

It catalyses the reaction 2 (2R)-3-phosphoglycerate + 2 H(+) = D-ribulose 1,5-bisphosphate + CO2 + H2O. The enzyme catalyses D-ribulose 1,5-bisphosphate + O2 = 2-phosphoglycolate + (2R)-3-phosphoglycerate + 2 H(+). Functionally, ruBisCO catalyzes two reactions: the carboxylation of D-ribulose 1,5-bisphosphate, the primary event in carbon dioxide fixation, as well as the oxidative fragmentation of the pentose substrate. Both reactions occur simultaneously and in competition at the same active site. This is Ribulose bisphosphate carboxylase large chain 1 from Methylibium petroleiphilum (strain ATCC BAA-1232 / LMG 22953 / PM1).